Reading from the N-terminus, the 350-residue chain is Cephaeline 6'-O-methyltransferase CiOMT (350 aa).

5 residues coordinate S-adenosyl-L-methionine: Gly-193, Asp-216, Asp-236, Met-237, and Lys-250. His-254 (proton acceptor) is an active-site residue.

It belongs to the class I-like SAM-binding methyltransferase superfamily. Cation-independent O-methyltransferase family.

It is found in the cytoplasm. It localises to the cytosol. It catalyses the reaction 7'-O-demethylcephaeline + S-adenosyl-L-methionine = cephaeline + S-adenosyl-L-homocysteine + H(+). The enzyme catalyses cephaeline + S-adenosyl-L-methionine = emetine + S-adenosyl-L-homocysteine + H(+). Its pathway is alkaloid biosynthesis. With respect to regulation, inhibited by Co(2+), Ni(2+), Zn(2+) and Mn(2+) ions. Functionally, O-methyltransferase involved in the biosynthesis of ipecac and benzylisoquinoline monoterpenoid-isoquinoline alkaloids natural products, starting by the condensation of dopamine and secologanin, and including emetine and cephaeline, drugs used both as anti-protozoal (e.g. treatment of ameobiasis) and as emetic agents. Catalyzes successively the 7'-O-methylation of 7'-O-demethylcephaeline to produce cephaeline, and its 6'-O-methylation to produce emetine. This chain is Cephaeline 6'-O-methyltransferase CiOMT, found in Carapichea ipecacuanha (Ipecac).